The following is a 384-amino-acid chain: L-cysteine:1D-myo-inositol 2-amino-2-deoxy-alpha-D-glucopyranoside ligase (384 aa).

Residue Cys-16 coordinates Zn(2+). L-cysteinyl-5'-AMP-binding positions include 16 to 19, Thr-31, and 54 to 56; these read CGIT and NVT. Residues 18–28 carry the 'HIGH' region motif; sequence ITPYDATHLGH. A 'ERGGDP' region motif is present at residues 159 to 164; it reads QSGGDP. Trp-199 serves as a coordination point for L-cysteinyl-5'-AMP. Residue Cys-203 coordinates Zn(2+). 221–223 contributes to the L-cysteinyl-5'-AMP binding site; that stretch reads GSD. A Zn(2+)-binding site is contributed by His-228. Ile-255 contacts L-cysteinyl-5'-AMP. Residues 261–265 carry the 'KMSKS' region motif; that stretch reads KMSKS.

It belongs to the class-I aminoacyl-tRNA synthetase family. MshC subfamily. In terms of assembly, monomer. The cofactor is Zn(2+).

It catalyses the reaction 1D-myo-inositol 2-amino-2-deoxy-alpha-D-glucopyranoside + L-cysteine + ATP = 1D-myo-inositol 2-(L-cysteinylamino)-2-deoxy-alpha-D-glucopyranoside + AMP + diphosphate + H(+). Its function is as follows. Catalyzes the ATP-dependent condensation of GlcN-Ins and L-cysteine to form L-Cys-GlcN-Ins. The protein is L-cysteine:1D-myo-inositol 2-amino-2-deoxy-alpha-D-glucopyranoside ligase of Mycobacterium leprae (strain Br4923).